We begin with the raw amino-acid sequence, 441 residues long: Tubulin alpha chain (441 aa).

GTP contacts are provided by Q11, E68, S137, G141, T142, T176, N203, and N224. E68 is a binding site for Mg(2+). The active site involves E250.

The protein belongs to the tubulin family. In terms of assembly, dimer of alpha and beta chains. A typical microtubule is a hollow water-filled tube with an outer diameter of 25 nm and an inner diameter of 15 nM. Alpha-beta heterodimers associate head-to-tail to form protofilaments running lengthwise along the microtubule wall with the beta-tubulin subunit facing the microtubule plus end conferring a structural polarity. Microtubules usually have 13 protofilaments but different protofilament numbers can be found in some organisms and specialized cells. It depends on Mg(2+) as a cofactor.

It localises to the cytoplasm. The protein localises to the cytoskeleton. The enzyme catalyses GTP + H2O = GDP + phosphate + H(+). Tubulin is the major constituent of microtubules, a cylinder consisting of laterally associated linear protofilaments composed of alpha- and beta-tubulin heterodimers. Microtubules grow by the addition of GTP-tubulin dimers to the microtubule end, where a stabilizing cap forms. Below the cap, tubulin dimers are in GDP-bound state, owing to GTPase activity of alpha-tubulin. This is Tubulin alpha chain (TUB1) from Encephalitozoon cuniculi (strain GB-M1) (Microsporidian parasite).